The sequence spans 380 residues: Cytochrome b (380 aa).

4 helical membrane-spanning segments follow: residues 34-54 (FGSL…LLAM), 78-99 (WLIR…FLHI), 114-134 (WNTG…GYVL), and 179-199 (FFAL…IHLT). Residues His-84 and His-98 each coordinate heme b. Heme b is bound by residues His-183 and His-197. Residue His-202 coordinates a ubiquinone. Transmembrane regions (helical) follow at residues 227-247 (LKDI…ALFS), 289-309 (LGGV…PFLH), 321-341 (LSQI…WIGS), and 348-368 (FIII…ILFP).

This sequence belongs to the cytochrome b family. The cytochrome bc1 complex contains 11 subunits: 3 respiratory subunits (MT-CYB, CYC1 and UQCRFS1), 2 core proteins (UQCRC1 and UQCRC2) and 6 low-molecular weight proteins (UQCRH/QCR6, UQCRB/QCR7, UQCRQ/QCR8, UQCR10/QCR9, UQCR11/QCR10 and a cleavage product of UQCRFS1). This cytochrome bc1 complex then forms a dimer. The cofactor is heme b.

The protein resides in the mitochondrion inner membrane. Functionally, component of the ubiquinol-cytochrome c reductase complex (complex III or cytochrome b-c1 complex) that is part of the mitochondrial respiratory chain. The b-c1 complex mediates electron transfer from ubiquinol to cytochrome c. Contributes to the generation of a proton gradient across the mitochondrial membrane that is then used for ATP synthesis. This Polyplectron bicalcaratum (Grey peacock-pheasant) protein is Cytochrome b (MT-CYB).